The chain runs to 71 residues: Small ribosomal subunit protein bS21 (71 aa).

The tract at residues 43 to 71 (TERKRAKASAVKRHAKKLARENARRTRLY) is disordered. Residues 46-59 (KRAKASAVKRHAKK) are compositionally biased toward basic residues. The segment covering 60 to 71 (LARENARRTRLY) has biased composition (basic and acidic residues).

The protein belongs to the bacterial ribosomal protein bS21 family.

In Edwardsiella ictaluri (strain 93-146), this protein is Small ribosomal subunit protein bS21.